The primary structure comprises 229 residues: Large ribosomal subunit protein uL1 (229 aa).

Belongs to the universal ribosomal protein uL1 family. Part of the 50S ribosomal subunit.

Functionally, binds directly to 23S rRNA. The L1 stalk is quite mobile in the ribosome, and is involved in E site tRNA release. In terms of biological role, protein L1 is also a translational repressor protein, it controls the translation of the L11 operon by binding to its mRNA. This chain is Large ribosomal subunit protein uL1, found in Mannheimia succiniciproducens (strain KCTC 0769BP / MBEL55E).